A 436-amino-acid chain; its full sequence is UDP-N-acetylmuramate--L-alanine ligase (436 aa).

111-117 is an ATP binding site; sequence GTHGKTS.

It belongs to the MurCDEF family.

Its subcellular location is the cytoplasm. It carries out the reaction UDP-N-acetyl-alpha-D-muramate + L-alanine + ATP = UDP-N-acetyl-alpha-D-muramoyl-L-alanine + ADP + phosphate + H(+). It participates in cell wall biogenesis; peptidoglycan biosynthesis. Functionally, cell wall formation. The sequence is that of UDP-N-acetylmuramate--L-alanine ligase from Lactiplantibacillus plantarum (strain ATCC BAA-793 / NCIMB 8826 / WCFS1) (Lactobacillus plantarum).